The sequence spans 257 residues: Cytochrome b561 domain-containing protein At2g30890 (257 aa).

Residues 1–21 (MEIHHQLLVSLLFLLLPLCSS) form the signal peptide. Residues 22–219 (QENTRSLAID…LFQDKWSYIQ (198 aa)) enclose the Cytochrome b561 domain. The next 5 helical transmembrane spans lie at 55-75 (VHGF…IISI), 91-111 (LFFL…IGAV), 125-145 (HQQL…LGFL), 157-177 (WFVG…INIY), and 191-211 (ANLW…VYLF). Residues histidine 56, histidine 95, histidine 125, and histidine 161 each coordinate heme b. The interval 235–257 (NISTAETGHGYEVEESKPELEKC) is disordered. Residues 243–257 (HGYEVEESKPELEKC) are compositionally biased toward basic and acidic residues.

The cofactor is heme b.

It is found in the membrane. The chain is Cytochrome b561 domain-containing protein At2g30890 from Arabidopsis thaliana (Mouse-ear cress).